Here is a 229-residue protein sequence, read N- to C-terminus: Ribosome maturation factor RimM (229 aa).

A disordered region spans residues 1 to 21 (MAGHDSGNAKRGRSPSFGVFV). One can recognise a PRC barrel domain in the interval 148-229 (ADEFYWVDLI…RVVVDWEADY (82 aa)).

Belongs to the RimM family. In terms of assembly, binds ribosomal protein uS19.

Its subcellular location is the cytoplasm. An accessory protein needed during the final step in the assembly of 30S ribosomal subunit, possibly for assembly of the head region. Essential for efficient processing of 16S rRNA. May be needed both before and after RbfA during the maturation of 16S rRNA. It has affinity for free ribosomal 30S subunits but not for 70S ribosomes. The protein is Ribosome maturation factor RimM of Burkholderia mallei (strain NCTC 10247).